The sequence spans 395 residues: F-box/kelch-repeat protein At3g13680 (395 aa).

The F-box domain occupies 1 to 47 (MTTMGDLPGDLVEEILSRVPLTSLRAIRSTCQKWNSLSKSQICGRKA). Kelch repeat units follow at residues 154-202 (ILRI…SLKG), 210-256 (KKET…VSLA), 265-314 (VLYQ…FIDE), and 337-383 (IVYI…LVQL).

In Arabidopsis thaliana (Mouse-ear cress), this protein is F-box/kelch-repeat protein At3g13680.